The following is a 178-amino-acid chain: ATP synthase subunit delta (178 aa).

The protein belongs to the ATPase delta chain family. As to quaternary structure, F-type ATPases have 2 components, F(1) - the catalytic core - and F(0) - the membrane proton channel. F(1) has five subunits: alpha(3), beta(3), gamma(1), delta(1), epsilon(1). F(0) has three main subunits: a(1), b(2) and c(10-14). The alpha and beta chains form an alternating ring which encloses part of the gamma chain. F(1) is attached to F(0) by a central stalk formed by the gamma and epsilon chains, while a peripheral stalk is formed by the delta and b chains.

The protein resides in the cell inner membrane. In terms of biological role, f(1)F(0) ATP synthase produces ATP from ADP in the presence of a proton or sodium gradient. F-type ATPases consist of two structural domains, F(1) containing the extramembraneous catalytic core and F(0) containing the membrane proton channel, linked together by a central stalk and a peripheral stalk. During catalysis, ATP synthesis in the catalytic domain of F(1) is coupled via a rotary mechanism of the central stalk subunits to proton translocation. This protein is part of the stalk that links CF(0) to CF(1). It either transmits conformational changes from CF(0) to CF(1) or is implicated in proton conduction. This is ATP synthase subunit delta from Nitrosomonas europaea (strain ATCC 19718 / CIP 103999 / KCTC 2705 / NBRC 14298).